Reading from the N-terminus, the 359-residue chain is GTP cyclohydrolase FolE2 (359 aa).

Belongs to the GTP cyclohydrolase IV family.

It catalyses the reaction GTP + H2O = 7,8-dihydroneopterin 3'-triphosphate + formate + H(+). It participates in cofactor biosynthesis; 7,8-dihydroneopterin triphosphate biosynthesis; 7,8-dihydroneopterin triphosphate from GTP: step 1/1. In terms of biological role, converts GTP to 7,8-dihydroneopterin triphosphate. This chain is GTP cyclohydrolase FolE2, found in Cereibacter sphaeroides (strain ATCC 17029 / ATH 2.4.9) (Rhodobacter sphaeroides).